The following is a 207-amino-acid chain: ATP synthase subunit b 2 (207 aa).

The chain crosses the membrane as a helical span at residues T53–M72.

The protein belongs to the ATPase B chain family. As to quaternary structure, F-type ATPases have 2 components, F(1) - the catalytic core - and F(0) - the membrane proton channel. F(1) has five subunits: alpha(3), beta(3), gamma(1), delta(1), epsilon(1). F(0) has three main subunits: a(1), b(2) and c(10-14). The alpha and beta chains form an alternating ring which encloses part of the gamma chain. F(1) is attached to F(0) by a central stalk formed by the gamma and epsilon chains, while a peripheral stalk is formed by the delta and b chains.

Its subcellular location is the cell inner membrane. F(1)F(0) ATP synthase produces ATP from ADP in the presence of a proton or sodium gradient. F-type ATPases consist of two structural domains, F(1) containing the extramembraneous catalytic core and F(0) containing the membrane proton channel, linked together by a central stalk and a peripheral stalk. During catalysis, ATP synthesis in the catalytic domain of F(1) is coupled via a rotary mechanism of the central stalk subunits to proton translocation. In terms of biological role, component of the F(0) channel, it forms part of the peripheral stalk, linking F(1) to F(0). The b'-subunit is a diverged and duplicated form of b found in plants and photosynthetic bacteria. This is ATP synthase subunit b 2 (atpF2) from Rhizobium leguminosarum bv. trifolii (strain WSM2304).